Consider the following 718-residue polypeptide: Polyribonucleotide nucleotidyltransferase (718 aa).

Mg(2+) contacts are provided by Asp497 and Asp503. Residues 564 to 623 (PRLLTMKIDPEQIGLVIGPGGKTIKGITEQTGSKIDIADDGTVTIAALEAEKAEKAKQII) form the KH domain. The S1 motif domain maps to 633 to 701 (GEVYMGRVTR…AKGRLNLTRL (69 aa)).

It belongs to the polyribonucleotide nucleotidyltransferase family. Requires Mg(2+) as cofactor.

The protein localises to the cytoplasm. The enzyme catalyses RNA(n+1) + phosphate = RNA(n) + a ribonucleoside 5'-diphosphate. Its function is as follows. Involved in mRNA degradation. Catalyzes the phosphorolysis of single-stranded polyribonucleotides processively in the 3'- to 5'-direction. The protein is Polyribonucleotide nucleotidyltransferase of Rippkaea orientalis (strain PCC 8801 / RF-1) (Cyanothece sp. (strain PCC 8801)).